We begin with the raw amino-acid sequence, 666 residues long: E3 ubiquitin-protein ligase MBR2 (666 aa).

Composition is skewed to polar residues over residues M1–I14, C23–L35, F42–S58, and S73–S88. 6 disordered regions span residues M1–S58, S73–L95, S155–S179, S221–P329, N400–N433, and G457–R491. Residues S221–S239 are compositionally biased toward low complexity. Polar residues-rich tracts occupy residues A258–I268, F286–A303, and G414–N433. The RING-type; atypical zinc finger occupies C619 to K660.

This sequence belongs to the RING-type zinc finger family. As to quaternary structure, interacts with MED25 and UBC11.

The enzyme catalyses S-ubiquitinyl-[E2 ubiquitin-conjugating enzyme]-L-cysteine + [acceptor protein]-L-lysine = [E2 ubiquitin-conjugating enzyme]-L-cysteine + N(6)-ubiquitinyl-[acceptor protein]-L-lysine.. Its pathway is protein modification; protein ubiquitination. Its function is as follows. E3 ubiquitin-protein ligase that functions as a regulator of MED25 stability by targeting MED25 for degradation in a RING-H2-dependent way. Proteasome-dependent degradation of MED25 seems to activate its function as positive regulator of FLOWERING LOCUS T (FT) and is important to induce the expression of FT and consequently to promote flowering. May function downstream of HAL3 and be required for HAL3-regulated plant growth. Activation of MBR2 by HAL3 may lead to the degradation of cell cycle suppressors, resulting in enhancement of cell division and plant growth. The polypeptide is E3 ubiquitin-protein ligase MBR2 (MBR2) (Arabidopsis thaliana (Mouse-ear cress)).